We begin with the raw amino-acid sequence, 431 residues long: Histidinol dehydrogenase (431 aa).

Positions 130, 191, and 214 each coordinate NAD(+). Residues serine 237, glutamine 259, and histidine 262 each contribute to the substrate site. Zn(2+)-binding residues include glutamine 259 and histidine 262. Active-site proton acceptor residues include glutamate 327 and histidine 328. Substrate is bound by residues histidine 328, aspartate 361, glutamate 415, and histidine 420. A Zn(2+)-binding site is contributed by aspartate 361. Residue histidine 420 coordinates Zn(2+).

It belongs to the histidinol dehydrogenase family. Zn(2+) is required as a cofactor.

It catalyses the reaction L-histidinol + 2 NAD(+) + H2O = L-histidine + 2 NADH + 3 H(+). Its pathway is amino-acid biosynthesis; L-histidine biosynthesis; L-histidine from 5-phospho-alpha-D-ribose 1-diphosphate: step 9/9. Catalyzes the sequential NAD-dependent oxidations of L-histidinol to L-histidinaldehyde and then to L-histidine. The chain is Histidinol dehydrogenase from Rhodopseudomonas palustris (strain ATCC BAA-98 / CGA009).